A 187-amino-acid chain; its full sequence is UPF0301 protein HS_0009 (187 aa).

Belongs to the UPF0301 (AlgH) family.

This Histophilus somni (strain 129Pt) (Haemophilus somnus) protein is UPF0301 protein HS_0009.